The chain runs to 400 residues: CinA-like protein (400 aa).

The protein belongs to the CinA family.

The protein is CinA-like protein of Escherichia coli O9:H4 (strain HS).